Consider the following 310-residue polypeptide: Ribosomal RNA small subunit methyltransferase H (310 aa).

Residues 47-49 (GGH), aspartate 66, phenylalanine 93, aspartate 108, and glutamine 115 each bind S-adenosyl-L-methionine.

The protein belongs to the methyltransferase superfamily. RsmH family.

It is found in the cytoplasm. It carries out the reaction cytidine(1402) in 16S rRNA + S-adenosyl-L-methionine = N(4)-methylcytidine(1402) in 16S rRNA + S-adenosyl-L-homocysteine + H(+). Specifically methylates the N4 position of cytidine in position 1402 (C1402) of 16S rRNA. The protein is Ribosomal RNA small subunit methyltransferase H of Prochlorococcus marinus (strain MIT 9303).